Consider the following 122-residue polypeptide: Ferredoxin (122 aa).

Positions 1–33 (MSHDRRLTVGSLLPNQPRPVAVPKAPSVVQPSK) are disordered. Positions 8–14 (TVGSLLP) are targeting peptide. Positions 40–122 (AIIRLEQNGR…FRLACQANME (83 aa)) constitute a 2Fe-2S ferredoxin-type domain. [2Fe-2S] cluster-binding residues include Cys75, Cys80, Cys83, and Cys117.

Belongs to the 2Fe2S plant-type ferredoxin family. It depends on [2Fe-2S] cluster as a cofactor.

It is found in the encapsulin nanocompartment. Its function is as follows. Cargo protein of a type 1 encapsulin nanocompartment. An iron-binding protein probably involved in iron mineralization in the encapsulin nanocompartment. 2 different cargo proteins have been identified (IMEF and Fer); when both are expressed in E.coli with the shell protein only IMEF is detected within the nanocompartment. E.coli expressing all 3 genes stores the largest amount of iron and is protected from Fe/H2O2-induced oxidative stress. In Bacillus thermotolerans (Quasibacillus thermotolerans), this protein is Ferredoxin.